Consider the following 65-residue polypeptide: uncharacterized protein (65 aa).

This is an uncharacterized protein from Vaccinia virus (strain Copenhagen) (VACV).